The sequence spans 573 residues: Leucine aminopeptidase, chloroplastic (573 aa).

Residues 1–53 (MATLRVSSLLASSPSSLHCNPSVFTKCQSSPRWAFSFSVTPLCSRRSKRIVHC) constitute a chloroplast transit peptide. The Mn(2+) site is built by K342 and D347. K354 is a catalytic residue. Mn(2+)-binding residues include D367, D427, and E429. R431 is an active-site residue.

It belongs to the peptidase M17 family. In terms of assembly, homohexamer (dimer of homotrimers). It depends on Mn(2+) as a cofactor. In terms of tissue distribution, in tubers and floral buds of untreated plants. After abscisic acid (ABA) treatment or mechanical wounding is mostly accumulated in leaves, to a lesser extent in stems, but not in roots.

It localises to the plastid. The protein resides in the chloroplast. The enzyme catalyses Release of an N-terminal amino acid, Xaa-|-Yaa-, in which Xaa is preferably Leu, but may be other amino acids including Pro although not Arg or Lys, and Yaa may be Pro. Amino acid amides and methyl esters are also readily hydrolyzed, but rates on arylamides are exceedingly low.. The catalysed reaction is Release of N-terminal proline from a peptide.. Presumably involved in the processing and regular turnover of intracellular proteins. The polypeptide is Leucine aminopeptidase, chloroplastic (LAP) (Solanum tuberosum (Potato)).